Here is a 357-residue protein sequence, read N- to C-terminus: MTKIAYTGGGTVGHVSVNLSLIPTSIEKGHEAFYIGSKHGIEREMIESQLPDIQYYPISSGKLRRYLSFENAKDVFKVLKGILDARKILKKQKPDLLFSKGGFVSVPVVIAARSLKIPTIIHESDLTPGLANKISLKFAKKIYTTFEDTLTYLPKDKADFVGATVREDLKQGNKERGYQLTDFDKNKKVLLVMGGSLGSKKLNNIIRQNIEALLHDYQIIHLTGKGLVDDSINKKGYVQFEFVKDDLTDLLAITDTVVSRAGSNAIYEFLSLRIPMLLIPLGLDQSRGDQIDNAKNFESKGYGRHIPEDQLTEVNLLQELNDIELHRESIIKQMETYQESYTKEDLFDKIIHDALNK.

Arg-166, Ser-196, and Gln-290 together coordinate UDP-N-acetyl-alpha-D-glucosamine.

The protein belongs to the glycosyltransferase 28 family. MurG subfamily.

Its subcellular location is the cell membrane. The enzyme catalyses Mur2Ac(oyl-L-Ala-gamma-D-Glu-L-Lys-D-Ala-D-Ala)-di-trans,octa-cis-undecaprenyl diphosphate + UDP-N-acetyl-alpha-D-glucosamine = beta-D-GlcNAc-(1-&gt;4)-Mur2Ac(oyl-L-Ala-gamma-D-Glu-L-Lys-D-Ala-D-Ala)-di-trans,octa-cis-undecaprenyl diphosphate + UDP + H(+). The protein operates within cell wall biogenesis; peptidoglycan biosynthesis. Its function is as follows. Cell wall formation. Catalyzes the transfer of a GlcNAc subunit on undecaprenyl-pyrophosphoryl-MurNAc-pentapeptide (lipid intermediate I) to form undecaprenyl-pyrophosphoryl-MurNAc-(pentapeptide)GlcNAc (lipid intermediate II). The protein is UDP-N-acetylglucosamine--N-acetylmuramyl-(pentapeptide) pyrophosphoryl-undecaprenol N-acetylglucosamine transferase of Staphylococcus epidermidis (strain ATCC 35984 / DSM 28319 / BCRC 17069 / CCUG 31568 / BM 3577 / RP62A).